A 541-amino-acid polypeptide reads, in one-letter code: Chaperonin GroEL 2 (541 aa).

ATP contacts are provided by residues 29-32 (TLGP), 86-90 (DGTTT), Gly-413, 476-478 (NAA), and Asp-492.

Belongs to the chaperonin (HSP60) family. As to quaternary structure, forms a cylinder of 14 subunits composed of two heptameric rings stacked back-to-back. Interacts with the co-chaperonin GroES.

It localises to the secreted. Its subcellular location is the capsule. It is found in the cell surface. The protein resides in the cell wall. It catalyses the reaction ATP + H2O + a folded polypeptide = ADP + phosphate + an unfolded polypeptide.. In terms of biological role, together with its co-chaperonin GroES, plays an essential role in assisting protein folding. The GroEL-GroES system forms a nano-cage that allows encapsulation of the non-native substrate proteins and provides a physical environment optimized to promote and accelerate protein folding. This chain is Chaperonin GroEL 2, found in Mycolicibacterium vanbaalenii (strain DSM 7251 / JCM 13017 / BCRC 16820 / KCTC 9966 / NRRL B-24157 / PYR-1) (Mycobacterium vanbaalenii).